Consider the following 56-residue polypeptide: UPF0391 membrane protein Rru_A0119 (56 aa).

The next 2 membrane-spanning stretches (helical) occupy residues 4–24 (WALIFLVVAVVAALFGFGGIA) and 30–50 (IAQILFFVFLVLLVISLIMHF).

This sequence belongs to the UPF0391 family.

The protein localises to the cell membrane. This is UPF0391 membrane protein Rru_A0119 from Rhodospirillum rubrum (strain ATCC 11170 / ATH 1.1.1 / DSM 467 / LMG 4362 / NCIMB 8255 / S1).